Here is a 159-residue protein sequence, read N- to C-terminus: Nascent polypeptide-associated complex subunit beta (159 aa).

2 disordered regions span residues 1–39 (MDME…GMDD) and 121–159 (ESYQ…DKVE). Residues 23–32 (TPRRKVKNVH) are compositionally biased toward basic residues. In terms of domain architecture, NAC-A/B spans 36–101 (GMDDKKLQTS…GEDKELTELV (66 aa)). The segment covering 136–153 (KDDDEDDDDIPDLVEGEN) has biased composition (acidic residues).

It belongs to the NAC-beta family. In terms of assembly, part of the nascent polypeptide-associated complex (NAC), consisting of EGD2 and EGD1. NAC associates with ribosomes via EGD1.

It localises to the cytoplasm. The protein localises to the nucleus. Component of the nascent polypeptide-associated complex (NAC), a dynamic component of the ribosomal exit tunnel, protecting the emerging polypeptides from interaction with other cytoplasmic proteins to ensure appropriate nascent protein targeting. The NAC complex also promotes mitochondrial protein import by enhancing productive ribosome interactions with the outer mitochondrial membrane and blocks the inappropriate interaction of ribosomes translating non-secretory nascent polypeptides with translocation sites in the membrane of the endoplasmic reticulum. EGD1 may act as a transcription factor that exert a negative effect on the expression of several genes that are transcribed by RNA polymerase II. The polypeptide is Nascent polypeptide-associated complex subunit beta (egd1) (Botryotinia fuckeliana (strain B05.10) (Noble rot fungus)).